We begin with the raw amino-acid sequence, 67 residues long: UPF0253 protein VV2574 (67 aa).

Belongs to the UPF0253 family.

This is UPF0253 protein VV2574 from Vibrio vulnificus (strain YJ016).